Reading from the N-terminus, the 124-residue chain is Putative iron-sulfur cluster insertion protein ErpA (124 aa).

Residues C49, C113, and C115 each coordinate iron-sulfur cluster.

It belongs to the HesB/IscA family. In terms of assembly, homodimer. The cofactor is iron-sulfur cluster.

In terms of biological role, required for insertion of 4Fe-4S clusters. This Acidovorax sp. (strain JS42) protein is Putative iron-sulfur cluster insertion protein ErpA.